The sequence spans 156 residues: Transcriptional repressor NrdR (156 aa).

A zinc finger spans residues 3–34 (CPSCQFNGTRVVDSRPVDDNKEIRRRRECESC). An ATP-cone domain is found at 49-139 (LVVVKKEGSR…VYRQFKDINV (91 aa)).

The protein belongs to the NrdR family. Zn(2+) is required as a cofactor.

Its function is as follows. Negatively regulates transcription of bacterial ribonucleotide reductase nrd genes and operons by binding to NrdR-boxes. This Lysinibacillus sphaericus (strain C3-41) protein is Transcriptional repressor NrdR.